The primary structure comprises 88 residues: Small ribosomal subunit protein uS17 (88 aa).

The protein belongs to the universal ribosomal protein uS17 family. As to quaternary structure, part of the 30S ribosomal subunit.

In terms of biological role, one of the primary rRNA binding proteins, it binds specifically to the 5'-end of 16S ribosomal RNA. This is Small ribosomal subunit protein uS17 from Prochlorococcus marinus (strain MIT 9215).